A 672-amino-acid polypeptide reads, in one-letter code: COBRA-like protein 10 (672 aa).

The signal sequence occupies residues 1 to 35; that stretch reads MRAIDVKTGMKIPWDVRYSLSLFIFLSSILFLSNG. 12 N-linked (GlcNAc...) asparagine glycosylation sites follow: Asn-79, Asn-135, Asn-264, Asn-328, Asn-339, Asn-368, Asn-422, Asn-442, Asn-483, Asn-562, Asn-570, and Asn-589. The 106-residue stretch at 502-607 folds into the CBM2 domain; that stretch reads KLPCPDNCGV…PVPGKQQSVI (106 aa). Ser-646 carries GPI-anchor amidated serine lipidation. Residues 647–672 constitute a propeptide, removed in mature form; the sequence is SGHRRGISVSMSFVFATIAAFALMMD. A Required for processing by the PIG complex, a critical step for apical plasma membrane localization in pollen tubes motif is present at residues 664–672; the sequence is IAAFALMMD.

Belongs to the COBRA family. The GPI-anchor attachment at Ser-646 requires APTG1. Expressed in roots, stems, leaves, flowers and siliques. Specific expression in the pollen tube.

It is found in the cell membrane. The protein localises to the cytoplasm. It localises to the vesicle. Functionally, involved in the deposition of apical pectin cap and cellulose microfibrils in pollen tubes. Not essential for pollen development, hydration or germination, but required for pollen tubes growth in the female transmitting tract of pistil and toward micropyles, via the perception of ovule guidance cues. The sequence is that of COBRA-like protein 10 from Arabidopsis thaliana (Mouse-ear cress).